The following is a 120-amino-acid chain: NAD(P)H-quinone oxidoreductase subunit 3 (120 aa).

3 helical membrane passes run 10-30 (FLGFLLIAAAVPILALVTNLI), 64-84 (MFALVFVIFDVETVFLYPWAV), and 89-109 (LGLLAFIEALIFIAILVIALA).

Belongs to the complex I subunit 3 family. As to quaternary structure, NDH-1 can be composed of about 15 different subunits; different subcomplexes with different compositions have been identified which probably have different functions.

The protein localises to the cellular thylakoid membrane. The catalysed reaction is a plastoquinone + NADH + (n+1) H(+)(in) = a plastoquinol + NAD(+) + n H(+)(out). It carries out the reaction a plastoquinone + NADPH + (n+1) H(+)(in) = a plastoquinol + NADP(+) + n H(+)(out). Its function is as follows. NDH-1 shuttles electrons from an unknown electron donor, via FMN and iron-sulfur (Fe-S) centers, to quinones in the respiratory and/or the photosynthetic chain. The immediate electron acceptor for the enzyme in this species is believed to be plastoquinone. Couples the redox reaction to proton translocation, and thus conserves the redox energy in a proton gradient. Cyanobacterial NDH-1 also plays a role in inorganic carbon-concentration. The chain is NAD(P)H-quinone oxidoreductase subunit 3 from Prochlorococcus marinus (strain MIT 9312).